Here is a 547-residue protein sequence, read N- to C-terminus: Cytochrome P450 monooxygenase 81 (547 aa).

The next 2 helical transmembrane spans lie at 6–23 (IPTQ…LFLL) and 106–124 (AFFA…ATAG). Cys-483 contributes to the heme binding site. N-linked (GlcNAc...) asparagine glycosylation is found at Asn-503 and Asn-516.

Belongs to the cytochrome P450 family. Requires heme as cofactor.

The protein localises to the membrane. It participates in secondary metabolite biosynthesis. Cytochrome P450 monooxygenase that is able to use dehydroabietic acid as a substrate for oxidation. The polypeptide is Cytochrome P450 monooxygenase 81 (Postia placenta (strain ATCC 44394 / Madison 698-R) (Brown rot fungus)).